A 211-amino-acid chain; its full sequence is FMN-dependent NADH:quinone oxidoreductase (211 aa).

Residue 17 to 19 (SYS) participates in FMN binding.

Belongs to the azoreductase type 1 family. As to quaternary structure, homodimer. Requires FMN as cofactor.

The enzyme catalyses 2 a quinone + NADH + H(+) = 2 a 1,4-benzosemiquinone + NAD(+). The catalysed reaction is N,N-dimethyl-1,4-phenylenediamine + anthranilate + 2 NAD(+) = 2-(4-dimethylaminophenyl)diazenylbenzoate + 2 NADH + 2 H(+). Its function is as follows. Quinone reductase that provides resistance to thiol-specific stress caused by electrophilic quinones. Also exhibits azoreductase activity. Catalyzes the reductive cleavage of the azo bond in aromatic azo compounds to the corresponding amines. This is FMN-dependent NADH:quinone oxidoreductase from Bacillus velezensis (strain DSM 23117 / BGSC 10A6 / LMG 26770 / FZB42) (Bacillus amyloliquefaciens subsp. plantarum).